A 290-amino-acid polypeptide reads, in one-letter code: UPF0046 protein K07C11.7 (290 aa).

Residues 1–22 (MFHFSIGTVLISICWLAQWMEA) form the signal peptide. Asn-204 carries an N-linked (GlcNAc...) asparagine glycan.

Belongs to the UPF0046 family.

In Caenorhabditis elegans, this protein is UPF0046 protein K07C11.7.